The primary structure comprises 456 residues: Dual-specificity RNA methyltransferase RlmN (456 aa).

The interval 1–21 (MIQRHLGQPRLIQNGGDAGGV) is disordered. Glu-175 acts as the Proton acceptor in catalysis. The Radical SAM core domain occupies 183-416 (DEERGAVCIS…QDAGYSAPIR (234 aa)). Residues Cys-190 and Cys-427 are joined by a disulfide bond. Residues Cys-197, Cys-201, and Cys-204 each contribute to the [4Fe-4S] cluster site. Residues 253 to 254 (GE), Ser-285, 307 to 309 (SLH), and Asn-384 each bind S-adenosyl-L-methionine. Cys-427 serves as the catalytic S-methylcysteine intermediate.

This sequence belongs to the radical SAM superfamily. RlmN family. It depends on [4Fe-4S] cluster as a cofactor.

It is found in the cytoplasm. It carries out the reaction adenosine(2503) in 23S rRNA + 2 reduced [2Fe-2S]-[ferredoxin] + 2 S-adenosyl-L-methionine = 2-methyladenosine(2503) in 23S rRNA + 5'-deoxyadenosine + L-methionine + 2 oxidized [2Fe-2S]-[ferredoxin] + S-adenosyl-L-homocysteine. The catalysed reaction is adenosine(37) in tRNA + 2 reduced [2Fe-2S]-[ferredoxin] + 2 S-adenosyl-L-methionine = 2-methyladenosine(37) in tRNA + 5'-deoxyadenosine + L-methionine + 2 oxidized [2Fe-2S]-[ferredoxin] + S-adenosyl-L-homocysteine. In terms of biological role, specifically methylates position 2 of adenine 2503 in 23S rRNA and position 2 of adenine 37 in tRNAs. m2A2503 modification seems to play a crucial role in the proofreading step occurring at the peptidyl transferase center and thus would serve to optimize ribosomal fidelity. In Paramagnetospirillum magneticum (strain ATCC 700264 / AMB-1) (Magnetospirillum magneticum), this protein is Dual-specificity RNA methyltransferase RlmN.